A 485-amino-acid chain; its full sequence is Protein nucleotidyltransferase YdiU (485 aa).

Positions 90, 92, 93, 113, 125, 126, 176, and 183 each coordinate ATP. Asp-252 acts as the Proton acceptor in catalysis. Mg(2+) contacts are provided by Asn-253 and Asp-262. An ATP-binding site is contributed by Asp-262.

This sequence belongs to the SELO family. Mg(2+) is required as a cofactor. Requires Mn(2+) as cofactor.

It catalyses the reaction L-seryl-[protein] + ATP = 3-O-(5'-adenylyl)-L-seryl-[protein] + diphosphate. The enzyme catalyses L-threonyl-[protein] + ATP = 3-O-(5'-adenylyl)-L-threonyl-[protein] + diphosphate. The catalysed reaction is L-tyrosyl-[protein] + ATP = O-(5'-adenylyl)-L-tyrosyl-[protein] + diphosphate. It carries out the reaction L-histidyl-[protein] + UTP = N(tele)-(5'-uridylyl)-L-histidyl-[protein] + diphosphate. It catalyses the reaction L-seryl-[protein] + UTP = O-(5'-uridylyl)-L-seryl-[protein] + diphosphate. The enzyme catalyses L-tyrosyl-[protein] + UTP = O-(5'-uridylyl)-L-tyrosyl-[protein] + diphosphate. Functionally, nucleotidyltransferase involved in the post-translational modification of proteins. It can catalyze the addition of adenosine monophosphate (AMP) or uridine monophosphate (UMP) to a protein, resulting in modifications known as AMPylation and UMPylation. In Aliivibrio fischeri (strain ATCC 700601 / ES114) (Vibrio fischeri), this protein is Protein nucleotidyltransferase YdiU.